Reading from the N-terminus, the 342-residue chain is Ribosomal RNA small subunit methyltransferase C (342 aa).

It belongs to the methyltransferase superfamily. RsmC family. As to quaternary structure, monomer.

It localises to the cytoplasm. The enzyme catalyses guanosine(1207) in 16S rRNA + S-adenosyl-L-methionine = N(2)-methylguanosine(1207) in 16S rRNA + S-adenosyl-L-homocysteine + H(+). In terms of biological role, specifically methylates the guanine in position 1207 of 16S rRNA in the 30S particle. In Shewanella loihica (strain ATCC BAA-1088 / PV-4), this protein is Ribosomal RNA small subunit methyltransferase C.